Consider the following 441-residue polypeptide: Trigger factor (441 aa).

The region spanning 161-246 (GDKVTIDFLG…VHEVLGEKLP (86 aa)) is the PPIase FKBP-type domain.

This sequence belongs to the FKBP-type PPIase family. Tig subfamily.

Its subcellular location is the cytoplasm. The enzyme catalyses [protein]-peptidylproline (omega=180) = [protein]-peptidylproline (omega=0). Functionally, involved in protein export. Acts as a chaperone by maintaining the newly synthesized protein in an open conformation. Functions as a peptidyl-prolyl cis-trans isomerase. In Teredinibacter turnerae (strain ATCC 39867 / T7901), this protein is Trigger factor.